A 624-amino-acid polypeptide reads, in one-letter code: Multicopper oxidase elcG (624 aa).

An N-terminal signal peptide occupies residues 1-18 (MACNILNFLTGLLSLSST). Plastocyanin-like domains lie at 48–160 (PGRA…IERG) and 216–373 (CMDA…TIRI). A glycan (N-linked (GlcNAc...) asparagine) is linked at Asn-65. Residues His-96, His-98, His-140, and His-142 each contribute to the Cu cation site. Asn-271, Asn-296, and Asn-464 each carry an N-linked (GlcNAc...) asparagine glycan. The 130-residue stretch at 474–603 (FLFQDPSQIE…GGMGVVILDG (130 aa)) folds into the Plastocyanin-like 3 domain. The Cu cation site is built by His-511, His-514, His-516, His-585, Cys-586, His-587, and His-591.

The protein belongs to the multicopper oxidase family.

It participates in secondary metabolite biosynthesis. Functionally, multicopper oxidase; part of the gene cluster that mediates the biosynthesis of elsinochrome C, a perelyenequinone phytotoxin structurally similar to cercosporin. The first step of elsinochrome C biosynthesis is performed by the polyketide synthase elcA which catalyzes the formation of nor-toralactone. The starter unit acyltransferase (SAT) domain of elcA initiates polyketide extension by the selective utilization of acetyl-CoA, which is elongated to the heptaketide in the beta-ketoacyl synthase (KS) domain by successive condensations with six malonyl units introduced by the malonyl acyltransferase (MAT) domain. The product template (PT) domain catalyzes C4-C9 and C2-C11 aldol cyclizations and dehydrations to a trihydroxynaphthalene, which is thought to be delivered to the thioesterase (TE) domain for product release. The bifunctional enzyme elcB then methylates nor-toralactone to toralactone before conducting an unusual oxidative aromatic ring opening. The next step in perylenequinone biosynthesis is an O-methylation at the nascent OH-6 of the elcB product performed by the O-methyltransferase elcD. The oxidative coupling of the two monomeric naphthol units in perylenequinone biosynthesis is catalyzed by the FAD-dependent monooxygenase elcE and the multicopper oxidase elcG. ElcG might catalyze the first intermolecular coupling in a regio- and stereo-selective manner via a phenol radical coupling mechanism and the elcE could forge the second C-C bond intramolecularly via a hydride transfer mechanism. The fasciclin domain-containing protein elcF might also play a role duting this step. The last piece of the puzzle in the biosynthesis of elsinochrome C is the additional annulation by enolate coupling to afford the dihydrobenzo(ghi)perylenequinone system, catalyzed by the FAD-dependent monooxygenase elcH. This is Multicopper oxidase elcG from Phaeosphaeria nodorum (strain SN15 / ATCC MYA-4574 / FGSC 10173) (Glume blotch fungus).